Here is a 303-residue protein sequence, read N- to C-terminus: Probable alpha-L-glutamate ligase (303 aa).

Residues 104–287 (LQLLAREGID…IAGMMIEFIE (184 aa)) form the ATP-grasp domain. Residues K141, 178 to 179 (EY), D187, and 211 to 213 (RSN) each bind ATP. Mg(2+)-binding residues include D248, E260, and N262. Residues D248, E260, and N262 each coordinate Mn(2+).

This sequence belongs to the RimK family. Mg(2+) serves as cofactor. The cofactor is Mn(2+).

This is Probable alpha-L-glutamate ligase from Pectobacterium carotovorum subsp. carotovorum (strain PC1).